The following is a 628-amino-acid chain: tRNA uridine 5-carboxymethylaminomethyl modification enzyme MnmG (628 aa).

Glycine 13–glycine 18 serves as a coordination point for FAD. An NAD(+)-binding site is contributed by glycine 273–phenylalanine 287.

Belongs to the MnmG family. In terms of assembly, homodimer. Heterotetramer of two MnmE and two MnmG subunits. FAD is required as a cofactor.

The protein resides in the cytoplasm. Its function is as follows. NAD-binding protein involved in the addition of a carboxymethylaminomethyl (cmnm) group at the wobble position (U34) of certain tRNAs, forming tRNA-cmnm(5)s(2)U34. This chain is tRNA uridine 5-carboxymethylaminomethyl modification enzyme MnmG, found in Buchnera aphidicola subsp. Acyrthosiphon pisum (strain 5A).